A 336-amino-acid polypeptide reads, in one-letter code: Glutamyl endopeptidase (336 aa).

An N-terminal signal peptide occupies residues 1-29 (MKGKFLKVSSLFVATLTTATLVSSPAANA). The propeptide occupies 30–68 (LSSKAMDNHPQQTQSSKQQTPKIQKGGNLKPLEQREHAN). The interval 34-61 (AMDNHPQQTQSSKQQTPKIQKGGNLKPL) is disordered. Residues 39–51 (PQQTQSSKQQTPK) are compositionally biased toward low complexity. Active-site charge relay system residues include histidine 119, aspartate 161, and serine 237. Positions 283–336 (FANDDQPNNPDNPDNPNNPDNPNNPDEPNNPDNPNNPDNPDNGDTNNSDNPDAA) are disordered. A compositionally biased stretch (low complexity) spans 286-336 (DDQPNNPDNPDNPNNPDNPNNPDEPNNPDNPNNPDNPDNGDTNNSDNPDAA). 11 repeat units span residues 289-291 (PNN), 292-294 (PDN), 295-297 (PDN), 298-300 (PNN), 301-303 (PDN), 304-306 (PNN), 310-312 (PNN), 313-315 (PDN), 316-318 (PNN), 319-321 (PDN), and 322-324 (PDN). Residues 289–324 (PNNPDNPDNPNNPDNPNNPDEPNNPDNPNNPDNPDN) are 11 X 3 AA repeats of P-[DN]-N.

This sequence belongs to the peptidase S1B family. Post-translationally, proteolytically cleaved by aureolysin (aur). This cleavage leads to the activation of SspA.

The protein resides in the secreted. The catalysed reaction is Preferential cleavage: Glu-|-Xaa, Asp-|-Xaa.. Functionally, preferentially cleaves peptide bonds on the carboxyl-terminal side of aspartate and glutamate. Along with other extracellular proteases it is involved in colonization and infection of human tissues. Required for proteolytic maturation of thiol protease SspB and inactivation of SspC, an inhibitor of SspB. It is the most important protease for degradation of fibronectin-binding protein (FnBP) and surface protein A, which are involved in adherence to host cells. May also protect bacteria against host defense mechanism by cleaving the immunoglobulin classes IgG, IgA and IgM. May be involved in the stability of secreted lipases. This chain is Glutamyl endopeptidase (sspA), found in Staphylococcus aureus (strain COL).